We begin with the raw amino-acid sequence, 238 residues long: DNA repair protein RecO (238 aa).

It belongs to the RecO family.

Involved in DNA repair and RecF pathway recombination. The polypeptide is DNA repair protein RecO (Anaplasma marginale (strain Florida)).